The following is a 357-amino-acid chain: DNA integrity scanning protein DisA (357 aa).

The region spanning 8–146 (VKSMINILQL…GNLRYTLKDI (139 aa)) is the DAC domain. Residues Gly75, Leu93, and 106 to 110 (MRHRT) each bind ATP.

It belongs to the DisA family. As to quaternary structure, homooctamer. It depends on Mg(2+) as a cofactor.

The catalysed reaction is 2 ATP = 3',3'-c-di-AMP + 2 diphosphate. Functionally, participates in a DNA-damage check-point that is active prior to asymmetric division when DNA is damaged. DisA forms globular foci that rapidly scan along the chromosomes during sporulation, searching for lesions. When a lesion is present, DisA pauses at the lesion site. This triggers a cellular response that culminates in a temporary block in sporulation initiation. In terms of biological role, also has diadenylate cyclase activity, catalyzing the condensation of 2 ATP molecules into cyclic di-AMP (c-di-AMP). c-di-AMP acts as a signaling molecule that couples DNA integrity with progression of sporulation. The rise in c-di-AMP level generated by DisA while scanning the chromosome, operates as a positive signal that advances sporulation; upon encountering a lesion, the DisA focus arrests at the damaged site and halts c-di-AMP synthesis. This is DNA integrity scanning protein DisA from Bacillus cereus (strain AH187).